The sequence spans 367 residues: tRNA 2-selenouridine synthase (367 aa).

The 124-residue stretch at 14-137 folds into the Rhodanese domain; sequence FLNDVPLMDV…LRRFLIDSLE (124 aa). The active-site S-selanylcysteine intermediate is the cysteine 97.

The protein belongs to the SelU family. In terms of assembly, monomer.

It catalyses the reaction 5-methylaminomethyl-2-thiouridine(34) in tRNA + selenophosphate + (2E)-geranyl diphosphate + H2O + H(+) = 5-methylaminomethyl-2-selenouridine(34) in tRNA + (2E)-thiogeraniol + phosphate + diphosphate. The enzyme catalyses 5-methylaminomethyl-2-thiouridine(34) in tRNA + (2E)-geranyl diphosphate = 5-methylaminomethyl-S-(2E)-geranyl-thiouridine(34) in tRNA + diphosphate. The catalysed reaction is 5-methylaminomethyl-S-(2E)-geranyl-thiouridine(34) in tRNA + selenophosphate + H(+) = 5-methylaminomethyl-2-(Se-phospho)selenouridine(34) in tRNA + (2E)-thiogeraniol. It carries out the reaction 5-methylaminomethyl-2-(Se-phospho)selenouridine(34) in tRNA + H2O = 5-methylaminomethyl-2-selenouridine(34) in tRNA + phosphate. Its function is as follows. Involved in the post-transcriptional modification of the uridine at the wobble position (U34) of tRNA(Lys), tRNA(Glu) and tRNA(Gln). Catalyzes the conversion of 2-thiouridine (S2U-RNA) to 2-selenouridine (Se2U-RNA). Acts in a two-step process involving geranylation of 2-thiouridine (S2U) to S-geranyl-2-thiouridine (geS2U) and subsequent selenation of the latter derivative to 2-selenouridine (Se2U) in the tRNA chain. The protein is tRNA 2-selenouridine synthase of Marinobacter nauticus (strain ATCC 700491 / DSM 11845 / VT8) (Marinobacter aquaeolei).